Consider the following 198-residue polypeptide: Transmembrane protein 9B (198 aa).

The N-terminal stretch at 1 to 33 (MATLWGGLLRLGSLLSLSCLALSVLLLAQLSDA) is a signal peptide. N-linked (GlcNAc...) asparagine glycosylation is present at asparagine 60. A helical membrane pass occupies residues 105–125 (IIIYLSILGLLLLYMVYLTLV). 2 positions are modified to phosphoserine: serine 142 and serine 189.

It belongs to the TMEM9 family. N-glycosylated.

The protein localises to the lysosome membrane. The protein resides in the early endosome membrane. Its function is as follows. Enhances production of pro-inflammatory cytokines induced by TNF, IL1B, and TLR ligands. Has a role in TNF activation of both the NF-kappaB and MAPK pathways. The polypeptide is Transmembrane protein 9B (TMEM9B) (Homo sapiens (Human)).